The following is a 348-amino-acid chain: 4-hydroxy-2-oxovalerate aldolase 2 (348 aa).

The Pyruvate carboxyltransferase domain occupies 5 to 256 (LQICDSTLRD…EARIKLFDAL (252 aa)). Residue 13–14 (RD) participates in substrate binding. Aspartate 14 is a binding site for Mn(2+). Residue histidine 17 is the Proton acceptor of the active site. Residues serine 168 and histidine 195 each coordinate substrate. Mn(2+) contacts are provided by histidine 195 and histidine 197.

The protein belongs to the 4-hydroxy-2-oxovalerate aldolase family.

The catalysed reaction is (S)-4-hydroxy-2-oxopentanoate = acetaldehyde + pyruvate. The chain is 4-hydroxy-2-oxovalerate aldolase 2 from Salinispora arenicola (strain CNS-205).